A 358-amino-acid chain; its full sequence is Hydroxyproline O-arabinosyltransferase 3 (358 aa).

The chain crosses the membrane as a helical; Signal-anchor span at residues 8–28 (LLFLLGFGFFVVTYNLLTLIV).

As to expression, ubiquitous.

It localises to the golgi apparatus. Its subcellular location is the cis-Golgi network membrane. The enzyme catalyses trans-4-hydroxy-L-prolyl-[protein] + UDP-beta-L-arabinofuranose = O-(beta-L-arabinofuranosyl)-trans-4-hydroxy-L-prolyl-[protein] + UDP + H(+). Functionally, glycosyltransferase involved in the O-arabinosylation of several proteins including extensins and small signaling peptides. Catalyzes the transfer of the initial L-arabinose to the hydroxyl group of Hyp residues. Contributes redundantly with HPAT1 and HPAT2 to arabinosylation of EXT3, but main contributor to arabinosylation of CLE peptides. This chain is Hydroxyproline O-arabinosyltransferase 3, found in Arabidopsis thaliana (Mouse-ear cress).